Here is a 362-residue protein sequence, read N- to C-terminus: Epoxyqueuosine reductase (362 aa).

The active-site Proton donor is the aspartate 143. In terms of domain architecture, 4Fe-4S ferredoxin-type spans 191–220 (PDSPKHQDSCGKCQACIKLCPTGAIQPGKM). [4Fe-4S] cluster-binding residues include cysteine 200, cysteine 203, cysteine 206, cysteine 210, cysteine 226, cysteine 253, cysteine 256, and cysteine 260.

The protein belongs to the QueG family. As to quaternary structure, monomer. Cob(II)alamin is required as a cofactor. Requires [4Fe-4S] cluster as cofactor.

Its subcellular location is the cytoplasm. The catalysed reaction is epoxyqueuosine(34) in tRNA + AH2 = queuosine(34) in tRNA + A + H2O. It functions in the pathway tRNA modification; tRNA-queuosine biosynthesis. Its function is as follows. Catalyzes the conversion of epoxyqueuosine (oQ) to queuosine (Q), which is a hypermodified base found in the wobble positions of tRNA(Asp), tRNA(Asn), tRNA(His) and tRNA(Tyr). The protein is Epoxyqueuosine reductase of Francisella cf. novicida (strain Fx1).